A 764-amino-acid chain; its full sequence is Thyrotropin receptor (764 aa).

An N-terminal signal peptide occupies residues Met1 to Gly21. Residues Lys22–Gly413 are Extracellular-facing. A disulfide bridge links Cys31 with Cys41. Residues Asn77 and Asn99 are each glycosylated (N-linked (GlcNAc...) asparagine). LRR repeat units follow at residues Leu100–Glu124, Leu125–Thr150, Asp151–Gly174, Cys176–Gly199, Thr200–Gly223, Tyr225–His248, and Pro264–Asn288. N-linked (GlcNAc...) asparagine glycosylation is found at Asn177 and Asn198. The N-linked (GlcNAc...) asparagine glycan is linked to Asn302. Position 385 is a sulfotyrosine (Tyr385). The helical transmembrane segment at Tyr414–Thr441 threads the bilayer. Residues Ser442–Arg450 lie on the Cytoplasmic side of the membrane. Residues Phe451–Val473 traverse the membrane as a helical segment. Over Asp474 to Cys494 the chain is Extracellular. Cys494 and Cys569 are joined by a disulfide. The chain crosses the membrane as a helical span at residues Asn495–Leu517. Residues Glu518–His537 lie on the Cytoplasmic side of the membrane. A helical transmembrane segment spans residues Ala538–Ile560. Over Ser561 to Leu580 the chain is Extracellular. Residues Ala581–Val602 traverse the membrane as a helical segment. Residues Lys603 to Arg625 are Cytoplasmic-facing. Residues Met626–Met649 form a helical membrane-spanning segment. The Extracellular segment spans residues Asn650–Lys660. Residues Ile661–Thr682 form a helical membrane-spanning segment. Residues Lys683–Leu764 lie on the Cytoplasmic side of the membrane. The short motif at Thr762–Leu764 is the PDZ-binding element.

It belongs to the G-protein coupled receptor 1 family. FSH/LSH/TSH subfamily. Interacts with heterodimer GPHA2:GPHB5; this interaction stimulates cAMP production. Interacts (via the PDZ-binding motif) with SCRIB; regulates TSHR trafficking and function. Glycosylated. Post-translationally, sulfated. Sulfation on Tyr-385 plays a role in thyrotropin receptor binding and activation.

It is found in the cell membrane. The protein resides in the basolateral cell membrane. Receptor for the thyroid-stimulating hormone (TSH) or thyrotropin. Also acts as a receptor for the heterodimeric glycoprotein hormone (GPHA2:GPHB5) or thyrostimulin. The activity of this receptor is mediated by G proteins which activate adenylate cyclase. Plays a central role in controlling thyroid cell metabolism. This is Thyrotropin receptor (Tshr) from Mus musculus (Mouse).